The chain runs to 80 residues: Acyl carrier protein (80 aa).

The Carrier domain occupies 3–78; that stretch reads DDTFSRIQSI…QVLEYIEAES (76 aa). Position 38 is an O-(pantetheine 4'-phosphoryl)serine (serine 38).

The protein belongs to the acyl carrier protein (ACP) family. Post-translationally, 4'-phosphopantetheine is transferred from CoA to a specific serine of apo-ACP by AcpS. This modification is essential for activity because fatty acids are bound in thioester linkage to the sulfhydryl of the prosthetic group.

It is found in the plastid. It localises to the chloroplast. The protein operates within lipid metabolism; fatty acid biosynthesis. Functionally, carrier of the growing fatty acid chain in fatty acid biosynthesis. In Trieres chinensis (Marine centric diatom), this protein is Acyl carrier protein.